The sequence spans 67 residues: Light-harvesting protein B-870 alpha chain (67 aa).

N-formylmethionine; in strain DSM 149 and DSM 151 is present on Met1. Residues 1–12 (MWRIWRLFDPMR) are Cytoplasmic-facing. A helical membrane pass occupies residues 13–33 (AMVAQAVFLLGLAVLIHLMLL). Residue His29 participates in a bacteriochlorophyll binding. The Periplasmic segment spans residues 34–67 (GTNKYNWLDGAKKAPAATAVAPVPAEVTSLAQAK).

The protein belongs to the antenna complex alpha subunit family. As to quaternary structure, an alpha/beta heterodimer. The core complex is formed by different alpha and beta chains, binding bacteriochlorophyll molecules, and arranged most probably in tetrameric structures disposed around the reaction center. The non-pigmented gamma chains may constitute additional components. The N-terminus is blocked.

The protein localises to the cell inner membrane. In terms of biological role, antenna complexes are light-harvesting systems, which transfer the excitation energy to the reaction centers. The polypeptide is Light-harvesting protein B-870 alpha chain (pufA) (Rubrivivax gelatinosus (Rhodocyclus gelatinosus)).